Consider the following 73-residue polypeptide: DNA-directed RNA polymerase subunit omega (73 aa).

This sequence belongs to the RNA polymerase subunit omega family. The RNAP catalytic core consists of 2 alpha, 1 beta, 1 beta' and 1 omega subunit. When a sigma factor is associated with the core the holoenzyme is formed, which can initiate transcription.

It carries out the reaction RNA(n) + a ribonucleoside 5'-triphosphate = RNA(n+1) + diphosphate. Promotes RNA polymerase assembly. Latches the N- and C-terminal regions of the beta' subunit thereby facilitating its interaction with the beta and alpha subunits. This chain is DNA-directed RNA polymerase subunit omega, found in Clostridium novyi (strain NT).